The sequence spans 940 residues: Isoleucine--tRNA ligase (940 aa).

A 'HIGH' region motif is present at residues 58-68 (PYANGSIHIGH). Residue Glu564 participates in L-isoleucyl-5'-AMP binding. The 'KMSKS' region motif lies at 605–609 (KMSKS). Lys608 lines the ATP pocket. Zn(2+)-binding residues include Cys903, Cys906, Cys923, and Cys926.

This sequence belongs to the class-I aminoacyl-tRNA synthetase family. IleS type 1 subfamily. As to quaternary structure, monomer. Requires Zn(2+) as cofactor.

It is found in the cytoplasm. The enzyme catalyses tRNA(Ile) + L-isoleucine + ATP = L-isoleucyl-tRNA(Ile) + AMP + diphosphate. Functionally, catalyzes the attachment of isoleucine to tRNA(Ile). As IleRS can inadvertently accommodate and process structurally similar amino acids such as valine, to avoid such errors it has two additional distinct tRNA(Ile)-dependent editing activities. One activity is designated as 'pretransfer' editing and involves the hydrolysis of activated Val-AMP. The other activity is designated 'posttransfer' editing and involves deacylation of mischarged Val-tRNA(Ile). This is Isoleucine--tRNA ligase from Shewanella baltica (strain OS223).